Reading from the N-terminus, the 372-residue chain is Lysophosphatidic acid receptor 5 (372 aa).

Over Met1–Met30 the chain is Extracellular. Asn4, Asn8, and Asn13 each carry an N-linked (GlcNAc...) asparagine glycan. Residues Val31–Phe51 traverse the membrane as a helical segment. The Cytoplasmic segment spans residues Leu52–Ser59. A helical membrane pass occupies residues Val60–Pro80. Topologically, residues Leu81–Thr100 are extracellular. Cys98 and Cys179 are disulfide-bonded. A helical transmembrane segment spans residues Ser101–Val121. Residues Asp122–Arg140 lie on the Cytoplasmic side of the membrane. A helical membrane pass occupies residues Val141 to Ala161. The Extracellular segment spans residues Arg162–Arg191. An N-linked (GlcNAc...) asparagine glycan is attached at Asn173. Residues Leu192–Val212 traverse the membrane as a helical segment. The Cytoplasmic portion of the chain corresponds to Tyr213–Asn243. The chain crosses the membrane as a helical span at residues Leu244 to Leu264. Residues Arg265–Arg280 are Extracellular-facing. A helical transmembrane segment spans residues Gly281–Tyr301. The Cytoplasmic portion of the chain corresponds to Tyr302–Leu372.

This sequence belongs to the G-protein coupled receptor 1 family.

It localises to the cell membrane. Receptor for lysophosphatidic acid (LPA), a mediator of diverse cellular activities. In Mus musculus (Mouse), this protein is Lysophosphatidic acid receptor 5 (Lpar5).